A 697-amino-acid polypeptide reads, in one-letter code: Polyribonucleotide nucleotidyltransferase (697 aa).

Residues D484 and D490 each contribute to the Mg(2+) site. In terms of domain architecture, KH spans 551–610 (PRITTIWVKTDKIRDVIGSGGKNIRGITEATGVSIDIEDSGRINIASTSKEACDKAIKMI). The S1 motif domain occupies 620–688 (GKLYMGTVKK…KQGKIKLSRK (69 aa)).

This sequence belongs to the polyribonucleotide nucleotidyltransferase family. The cofactor is Mg(2+).

Its subcellular location is the cytoplasm. The catalysed reaction is RNA(n+1) + phosphate = RNA(n) + a ribonucleoside 5'-diphosphate. In terms of biological role, involved in mRNA degradation. Catalyzes the phosphorolysis of single-stranded polyribonucleotides processively in the 3'- to 5'-direction. The chain is Polyribonucleotide nucleotidyltransferase from Geobacter sulfurreducens (strain ATCC 51573 / DSM 12127 / PCA).